Consider the following 257-residue polypeptide: MNKQRFLFAAKISGIHFLLSLTVAALLAGLIFFVWYPFPYQKIMGSFKLFFLIFGIDVCCGPLLTFILSNPQKRLKECIIDFSLIIFIQLSAFIYGMYNIYLARPVAVVFELDRIRVLSKGDILLDELPQALPEFRQFPYFGHHLLAVRDWKNAEERKEGVEKAFQGFDIAQQPTLWVAYSSELEKIRKAAKPLAQSFLKLNAKQQQDVKTALQKAHLNLEEAFFLPLVSNRSMEWMVILDKNMNITTAVEIDAFEL.

This Dichelobacter nodosus (Bacteroides nodosus) protein is Fimbrial assembly protein, serogroup I (fimB).